The sequence spans 557 residues: Formate--tetrahydrofolate ligase (557 aa).

66 to 73 (TPAGEGKS) contributes to the ATP binding site.

This sequence belongs to the formate--tetrahydrofolate ligase family.

The catalysed reaction is (6S)-5,6,7,8-tetrahydrofolate + formate + ATP = (6R)-10-formyltetrahydrofolate + ADP + phosphate. Its pathway is one-carbon metabolism; tetrahydrofolate interconversion. This chain is Formate--tetrahydrofolate ligase, found in Clostridium botulinum (strain Kyoto / Type A2).